A 90-amino-acid polypeptide reads, in one-letter code: Phaiodotoxin (90 aa).

Residues 1–18 (MKTIPLLFLLFIYFECDG) form the signal peptide. One can recognise an LCN-type CS-alpha/beta domain in the interval 19–90 (KFIRHKDESF…CFGALESKCA (72 aa)). 4 disulfides stabilise this stretch: Cys31-Cys56, Cys41-Cys68, Cys45-Cys70, and Cys81-Cys89.

In terms of tissue distribution, expressed by the venom gland.

It is found in the secreted. In terms of biological role, sodium channel (Nav) specific neurotoxin. Causes impairment of movement and mild paralysis in crickets at a dose of 0.5 ug per animal. A dose of 0.8 ug per cricket causes clear flaccid paralysis. A dose of 1.0 ug per cricket causes death within 2 hours. Is not toxic to mice at a dose of 100 ug per 20 g mouse weight. In Anuroctonus phaiodactylus (Mafia scorpion), this protein is Phaiodotoxin.